A 583-amino-acid polypeptide reads, in one-letter code: Putative rhophilin-2-like protein RHPN2P1 (583 aa).

One can recognise a BRO1 domain in the interval 26–375; sequence PLIPLGLKET…RLTYAQHQED (350 aa). The PDZ domain maps to 412-490; the sequence is RSNRFTAEEG…DEIEMKVVSL (79 aa).

In Homo sapiens (Human), this protein is Putative rhophilin-2-like protein RHPN2P1 (RHPN2P1).